The chain runs to 333 residues: Leukocyte cell-derived chemotaxin 1 (333 aa).

A helical transmembrane segment spans residues 42-62 (VGAVVLISGAVLLLFGAIGAF). In terms of domain architecture, BRICHOS spans 104 to 201 (GSGAEEAIEV…LCGDLPIFWL (98 aa)). Cys131 and Cys193 are joined by a disulfide. Residues 211 to 214 (RERR) constitute a propeptide that is removed on maturation. Residues 212-269 (ERREVVRKTVPTTTKRPHSGPRGNPGPARMRNDSRPSVQEDSEPFNPDNPYHQEGESM) form a disordered region. The N-linked (GlcNAc...) asparagine glycan is linked to Asn243. 4 disulfides stabilise this stretch: Cys281–Cys285, Cys282–Cys322, Cys292–Cys316, and Cys296–Cys312.

This sequence belongs to the chondromodulin-1 family. After cleavage, the post-translationally modified ChM-I is secreted as a glycoprotein.

Its subcellular location is the secreted. The protein resides in the extracellular space. The protein localises to the extracellular matrix. It localises to the endomembrane system. Functionally, bifunctional growth regulator that stimulates the growth of cultured chondrocytes in the presence of basic fibroblast growth factor (FGF) but inhibits the growth of cultured vascular endothelial cells. May contribute to the rapid growth of cartilage and vascular invasion prior to the replacement of cartilage by bone during endochondral bone development. Inhibits in vitro tube formation and mobilization of endothelial cells. Plays a role as antiangiogenic factor in cardiac valves to suppress neovascularization. The sequence is that of Leukocyte cell-derived chemotaxin 1 from Oryctolagus cuniculus (Rabbit).